The sequence spans 906 residues: Protein translocase subunit SecA (906 aa).

ATP-binding positions include Gln87, 105–109 (GEGKT), and Asp512. Residues 839 to 896 (LEEQQRQQSEAAPRTYTHATAESQLADEEAAGEEGHTTFVRDEQKIGRNDPCPCGSGK) are disordered. Positions 871–886 (EEGHTTFVRDEQKIGR) are enriched in basic and acidic residues. Zn(2+)-binding residues include Cys890, Cys892, Cys901, and His902.

The protein belongs to the SecA family. In terms of assembly, monomer and homodimer. Part of the essential Sec protein translocation apparatus which comprises SecA, SecYEG and auxiliary proteins SecDF-YajC and YidC. Requires Zn(2+) as cofactor.

It is found in the cell inner membrane. The protein localises to the cytoplasm. It catalyses the reaction ATP + H2O + cellular proteinSide 1 = ADP + phosphate + cellular proteinSide 2.. In terms of biological role, part of the Sec protein translocase complex. Interacts with the SecYEG preprotein conducting channel. Has a central role in coupling the hydrolysis of ATP to the transfer of proteins into and across the cell membrane, serving both as a receptor for the preprotein-SecB complex and as an ATP-driven molecular motor driving the stepwise translocation of polypeptide chains across the membrane. The sequence is that of Protein translocase subunit SecA from Aeromonas salmonicida (strain A449).